A 206-amino-acid chain; its full sequence is Large ribosomal subunit protein uL4 (206 aa).

It belongs to the universal ribosomal protein uL4 family. In terms of assembly, part of the 50S ribosomal subunit.

Its function is as follows. One of the primary rRNA binding proteins, this protein initially binds near the 5'-end of the 23S rRNA. It is important during the early stages of 50S assembly. It makes multiple contacts with different domains of the 23S rRNA in the assembled 50S subunit and ribosome. In terms of biological role, forms part of the polypeptide exit tunnel. The sequence is that of Large ribosomal subunit protein uL4 from Jannaschia sp. (strain CCS1).